The sequence spans 1108 residues: Isoleucine--tRNA ligase (1108 aa).

Residues 53–63 (PFANGLPHYGH) carry the 'HIGH' region motif. The short motif at 654–658 (KLSKR) is the 'KMSKS' region element. ATP is bound at residue K657.

It belongs to the class-I aminoacyl-tRNA synthetase family. IleS type 2 subfamily. In terms of assembly, monomer. Zn(2+) serves as cofactor.

The protein localises to the cytoplasm. The catalysed reaction is tRNA(Ile) + L-isoleucine + ATP = L-isoleucyl-tRNA(Ile) + AMP + diphosphate. Catalyzes the attachment of isoleucine to tRNA(Ile). As IleRS can inadvertently accommodate and process structurally similar amino acids such as valine, to avoid such errors it has two additional distinct tRNA(Ile)-dependent editing activities. One activity is designated as 'pretransfer' editing and involves the hydrolysis of activated Val-AMP. The other activity is designated 'posttransfer' editing and involves deacylation of mischarged Val-tRNA(Ile). This is Isoleucine--tRNA ligase from Rickettsia bellii (strain RML369-C).